Here is a 20-residue protein sequence, read N- to C-terminus: IAIQGGXGYLXQPGDGYKYA.

As to quaternary structure, monomer.

It localises to the secreted. The enzyme catalyses Hydrolysis of (1-&gt;4)-beta-linkages between N-acetylmuramic acid and N-acetyl-D-glucosamine residues in a peptidoglycan and between N-acetyl-D-glucosamine residues in chitodextrins.. Functionally, has bacteriolytic activity. This Lysobacter sp. (strain XL1) protein is Lysozyme.